Reading from the N-terminus, the 977-residue chain is MNQASSRIRIALSGRIETALENIYRKHNLTPINDETRQRLSSIPENLGFELVRKVFSLQAGLIYNLDSFIVSKVNQAVSFTGYPQPANSLSPSGRHVSRVLQEEMSVDSDAPSPKSLKSEDKGGSLHIPQLVALGELEFKKVFLLLSYIPGQHVGQVITADEIRLWKDLPMVEYEAAVWDRLGRHYCPQKDRRMLQWDSGKTHYYQCNVAPNGSYTFKVLSALQGPLLEHTGTHLHKVLGDDNVLTVKFADVQKSSSTYSIDHYFTYKGIAKNGIMIGLRRYQFFVFKDGGKEEKKKDLSTKKVKCYFIRTDSTAFYDMQNPYILTGKSIYEARMHFMHVHRAPTLANYMARFSLILSKTKTLEVDMTGITFDQIDDIHCHDQDGKDVLDKNKKPCIHSDGTGYISEDLARMCPLNIFKGKCLRSESIQEACYQDPPLLIQFRMFYDGYAVKGTFLLNKKLCPRTVQVRPSMIKVSKDPSLSNFSTFNALEVVTTSNPPKRTKLSKNLVALLSYGGIPNEFFLDILLNTLEESKSIFYNKRAALNAALNYGEMDDQNAAQMILVGIPLDEPHLKNYLSILLKTEKNDLKAGKLPVTESYYLMGTVDPTGALKEDEVCVILESGQISGEVLVYRNPGLHFGDIHILKATYVKALEEYVGNSKFAVFFPQKGPRSLGDEIAGGDFDGDMYFISRNPELLENFKPSEPWVSLTPPSKSNSGRAPSQLSPEELEEELFEMFLTAGFHASNVIGIAADSWLTIMDRFLILGDDRAEEKAEMKKKMLELIDIYYDALDAPKKGDKVYLPNKLKPDIFPHYMERDKKFQSTSILGLIFDFVKSQTTEEPSPSSEISKLPCFEDEPVSEFHMQKCRLWYDNYRTEMTQAMKTDKDESANEVIQRYKQEFYGAAGFEDSKKSLEELYPQALALYKIVYDYAIHAGVSKCRFVWKVAGPVLCRFYLNKKMQEKCLVCAPSVLKELWG.

The disordered stretch occupies residues 103–122; sequence EEMSVDSDAPSPKSLKSEDK.

Belongs to the RdRP family.

It carries out the reaction RNA(n) + a ribonucleoside 5'-triphosphate = RNA(n+1) + diphosphate. Probably involved in the RNA silencing pathway and required for the generation of small interfering RNAs (siRNAs). The polypeptide is Probable RNA-dependent RNA polymerase 5 (RDR5) (Arabidopsis thaliana (Mouse-ear cress)).